The primary structure comprises 560 residues: Putative transport protein PBPRA2420 (560 aa).

5 helical membrane-spanning segments follow: residues 5 to 25 (VASL…AVGL), 37 to 57 (VGNS…GFTF), 66 to 86 (FMLF…GIFF), 91 to 111 (HYLL…LAMT), and 161 to 181 (SLSV…IFLA). 2 RCK C-terminal domains span residues 203-292 (RGIG…FRNG) and 293-377 (KEVF…IGFI). A run of 6 helical transmembrane segments spans residues 386–406 (LLAF…TLAF), 409–429 (VAFG…LGFL), 452–472 (LMVF…DSFA), 477–497 (MVLV…YLFG), 506–526 (ALLF…DMIN), and 539–559 (AGTY…IIIM).

This sequence belongs to the AAE transporter (TC 2.A.81) family. YbjL subfamily.

The protein resides in the cell membrane. The chain is Putative transport protein PBPRA2420 from Photobacterium profundum (strain SS9).